Here is a 330-residue protein sequence, read N- to C-terminus: PDZ and LIM domain protein 4 (330 aa).

The PDZ domain occupies 1-84 (MTHSVTLRGP…HLTLSVSRPE (84 aa)). Disordered regions lie at residues 104–153 (DPES…SNEA) and 219–242 (EAGE…ASKL). Ser107, Ser111, Ser115, Ser118, Ser119, Ser124, and Ser134 each carry phosphoserine. Over residues 108–122 (QDCSPATSRRSSVSG) the composition is skewed to polar residues. One can recognise an LIM zinc-binding domain in the interval 255–305 (CTRCGHGIVGTIVKARDKLYHPECFMCSDCGLNLKQRGYFFLDERLYCENH).

Homodimer. Interacts (via C-terminus only or via combined C-terminus and LIM domain, but not LIM domain only) with PTPN13 (via the second or fourth PDZ domains). Found in a complex with PTPN13 and TRIP6. Interacts (via PDZ domain) with ACTN1 and ACTN2 (via C-terminal SDL residues). Interacts (via PDZ domain) with TRIP6 (via the second LIM domain or via the third LIM domain plus C-terminus). Interacts (via LIM domain) with GRIA1 (via C-terminus); this interaction as well as the interaction with alpha-actinin is required for their colocalization in early endosomes. Interacts with PDLIM1. Forms (via LIM domain) a heterodimer with PDLIM3. Interacts directly with SRC (via kinase domain and to a lesser extent the SH2 domain). Post-translationally, phosphorylated on tyrosine residue(s). Can be dephosphorylated by PTPN13. Expressed in several non-muscle tissues including lung, brain, ovary and uterus, and especially in epithelial cells at 14 dpc. In the uterus, high expression in the glandular epithelium, but absent in the simple columnar epithelium lining the uterus cavity.

Its subcellular location is the cytoplasm. It localises to the cytoskeleton. The protein localises to the cell projection. It is found in the dendritic spine. The protein resides in the early endosome membrane. Its subcellular location is the recycling endosome membrane. It localises to the nucleus. The protein localises to the perinuclear region. It is found in the lamellipodium. The protein resides in the synapse. Its subcellular location is the synaptosome. Its function is as follows. Suppresses SRC activation by recognizing and binding to active SRC and facilitating PTPN13-mediated dephosphorylation of SRC 'Tyr-419' leading to its inactivation. Inactivated SRC dissociates from this protein allowing the initiation of a new SRC inactivation cycle. Involved in reorganization of the actin cytoskeleton. In nonmuscle cells, binds to ACTN1 (alpha-actinin-1), increases the affinity of ACTN1 to F-actin (filamentous actin), and promotes formation of actin stress fibers. Involved in regulation of the synaptic AMPA receptor transport in dendritic spines of hippocampal pyramidal neurons directing the receptors toward an insertion at the postsynaptic membrane. Links endosomal surface-internalized GRIA1-containing AMPA receptors to the alpha-actinin/actin cytoskeleton. Increases AMPA receptor-mediated excitatory postsynaptic currents in neurons. This chain is PDZ and LIM domain protein 4 (Pdlim4), found in Mus musculus (Mouse).